A 725-amino-acid polypeptide reads, in one-letter code: Golgin candidate 4 (725 aa).

The segment at histidine 17 to proline 62 is disordered. Over residues aspartate 21–leucine 30 the composition is skewed to acidic residues. Residues glutamate 66 to arginine 132 are a coiled coil. Disordered stretches follow at residues serine 134–lysine 183, leucine 191–arginine 210, and alanine 311–methionine 349. Polar residues predominate over residues asparagine 148–glutamate 175. Coiled-coil stretches lie at residues leucine 191–threonine 316, proline 344–glutamate 407, and glutamate 437–methionine 563. The segment covering serine 324–methionine 349 has biased composition (basic and acidic residues). Residues arginine 562–alanine 613 enclose the GRIP domain. Residues glutamate 672 to lysine 688 are compositionally biased toward basic and acidic residues. A disordered region spans residues glutamate 672–threonine 725. A compositionally biased stretch (low complexity) spans leucine 711 to threonine 725.

Its subcellular location is the golgi apparatus. Its function is as follows. Golgi matrix protein playing a role in tethering of vesicles to Golgi membranes and in maintaining the overall structure of the Golgi apparatus. The sequence is that of Golgin candidate 4 (GC4) from Arabidopsis thaliana (Mouse-ear cress).